The chain runs to 516 residues: Nucleolar complex protein 4 homolog (516 aa).

A run of 3 helical transmembrane segments spans residues 296–316, 347–367, and 375–395; these read SACD…FILI, FFHL…LVAA, and LALT…CNLL.

This sequence belongs to the CBF/MAK21 family.

It is found in the nucleus membrane. Its subcellular location is the nucleus. The protein resides in the nucleolus. The polypeptide is Nucleolar complex protein 4 homolog (Noc4l) (Rattus norvegicus (Rat)).